The sequence spans 612 residues: MNQEEMLDRQKHIRNFSIIAHIDHGKSTLADRILELTDTIAKRDMQAQVLDDMALERERGITIKLNAVELHYKAKNGETYIFHLIDTPGHVDFSYEVSRSLAACEGALLVVDATQGVEAQTLANVYLAIDDDLEIIPVINKVDLPSAQPDVVKEEIEEMIGLDASDAILASGKTGLGVPEILERIVTDVPAPSGDLNAPLQALIFDSVYDDYRGVVLDVRVKEGQVKVGDTIQLMSNGKQFQVTEVGVMSPKAVKRDFLMVGDVGYITAAIKTIQDTRVGDTVTLADRPAEKPLKGYRKITPMVYSGLFPVDNAKFNDLREALEKLQLNDAALEFEPETSQALGFGFRCGFLGLLHMDVVQERLERDYDLDLIMTAPSVDYEIIMTDGTEKTIDNPADMPEVSEIKEIREPYVKASIMVPNDYVGPVMELSQRKRGEFVTMDYLDKYRVNVIYNLPLSEIIYDFFDDLKSSTKGYASLDYEITGYRQSDLVKMDILLNGDPVDALSTIVHKDFAYERGKAIVARLKTTIPRQQFEIPIQAAIGNKVIARSTVKAYRKNVLAKCYGGDITRKRKLLEKQKAGKKRMKSVGSVEVPQEAFMSILKMNDEESQGK.

The tr-type G domain occupies lysine 11–serine 193. GTP-binding positions include aspartate 23–threonine 28 and asparagine 140–aspartate 143.

The protein belongs to the TRAFAC class translation factor GTPase superfamily. Classic translation factor GTPase family. LepA subfamily.

The protein resides in the cell membrane. It catalyses the reaction GTP + H2O = GDP + phosphate + H(+). In terms of biological role, required for accurate and efficient protein synthesis under certain stress conditions. May act as a fidelity factor of the translation reaction, by catalyzing a one-codon backward translocation of tRNAs on improperly translocated ribosomes. Back-translocation proceeds from a post-translocation (POST) complex to a pre-translocation (PRE) complex, thus giving elongation factor G a second chance to translocate the tRNAs correctly. Binds to ribosomes in a GTP-dependent manner. The protein is Elongation factor 4 of Lacticaseibacillus paracasei (strain ATCC 334 / BCRC 17002 / CCUG 31169 / CIP 107868 / KCTC 3260 / NRRL B-441) (Lactobacillus paracasei).